Reading from the N-terminus, the 116-residue chain is Selenoprotein H (116 aa).

N6-acetyllysine is present on lysine 20. The cysteinyl-selenocysteine (Cys-Sec); redox-active cross-link spans 35–38; sequence CTSU. Residue selenocysteine 38 is a non-standard amino acid, selenocysteine.

The protein belongs to the SelWTH family.

In terms of biological role, may be involved in a redox-related process. In Mus musculus (Mouse), this protein is Selenoprotein H.